The primary structure comprises 117 residues: Non-specific lipid-transfer protein Lac s 1 (117 aa).

The signal sequence occupies residues 1-25 (MARMAMMILCVVLTCMVVATPYTEA). Disulfide bonds link Cys29–Cys76, Cys39–Cys53, Cys54–Cys99, and Cys74–Cys113.

This sequence belongs to the plant LTP family.

Its function is as follows. Plant non-specific lipid-transfer proteins transfer phospholipids as well as galactolipids across membranes. May play a role in wax or cutin deposition in the cell walls of expanding epidermal cells and certain secretory tissues. The polypeptide is Non-specific lipid-transfer protein Lac s 1 (Lactuca sativa (Garden lettuce)).